Reading from the N-terminus, the 93-residue chain is Pancreatic polypeptide prohormone (93 aa).

The signal sequence occupies residues 1–29; sequence MPAACRCLFLLLLSACVALLLQPPLGTRG. Tyr65 carries the tyrosine amide modification. A propeptide spanning residues 89–93 is cleaved from the precursor; sequence ELMDE.

Belongs to the NPY family.

It is found in the secreted. In terms of biological role, hormone secreted by pancreatic cells that acts as a regulator of pancreatic and gastrointestinal functions probably by signaling through the G protein-coupled receptor NPY4R2. This Canis lupus familiaris (Dog) protein is Pancreatic polypeptide prohormone (PPY).